The following is a 183-amino-acid chain: dTTP/UTP pyrophosphatase (183 aa).

Catalysis depends on Asp64, which acts as the Proton acceptor.

Belongs to the Maf family. YhdE subfamily. Requires a divalent metal cation as cofactor.

The protein resides in the cytoplasm. It catalyses the reaction dTTP + H2O = dTMP + diphosphate + H(+). The catalysed reaction is UTP + H2O = UMP + diphosphate + H(+). Its function is as follows. Nucleoside triphosphate pyrophosphatase that hydrolyzes dTTP and UTP. May have a dual role in cell division arrest and in preventing the incorporation of modified nucleotides into cellular nucleic acids. The sequence is that of dTTP/UTP pyrophosphatase from Acinetobacter baylyi (strain ATCC 33305 / BD413 / ADP1).